We begin with the raw amino-acid sequence, 257 residues long: Uroplakin-1a (257 aa).

Topologically, residues 1-13 (MASAATEGEKGSP) are cytoplasmic. The helical transmembrane segment at 14–34 (VVVGLLVVGNIIILLSGLALF) threads the bilayer. Over 35–58 (AETVWVTADQYRVYPLMGVSGKDD) the chain is Extracellular. Residues 59-85 (VFAGAWIAIFCGFSFFVVASFGVGAAL) traverse the membrane as a helical segment. The Cytoplasmic portion of the chain corresponds to 86–90 (CRRRY). The helical transmembrane segment at 91–111 (MILTYLLLMLIVYIFECASCI) threads the bilayer. The Extracellular segment spans residues 112 to 229 (TSYTHRDYMV…HIGHAIDSYT (118 aa)). A glycan (N-linked (GlcNAc...) asparagine) is linked at asparagine 169. The chain crosses the membrane as a helical span at residues 230–251 (WGISWFGFAILMWTLPVMLIAM). The Cytoplasmic portion of the chain corresponds to 252-257 (YFYTTL).

It belongs to the tetraspanin (TM4SF) family. As to quaternary structure, homodimer; disulfide-linked. Interacts with uroplakin-2 (UPK2). Binds to uropathogenic E.coli fimH.

The protein localises to the membrane. Functionally, component of the asymmetric unit membrane (AUM); a highly specialized biomembrane elaborated by terminally differentiated urothelial cells. May play an important role in normal bladder epithelial physiology, possibly in regulating membrane permeability of superficial umbrella cells or in stabilizing the apical membrane through AUM/cytoskeletal interactions. The polypeptide is Uroplakin-1a (Upk1a) (Mus musculus (Mouse)).